The chain runs to 234 residues: Sugar fermentation stimulation protein A (234 aa).

The segment at residues 201-220 (LLSEAQQRGVEILAYKAEIS) is a DNA-binding region (H-T-H motif).

It belongs to the SfsA family.

In terms of biological role, binds to DNA non-specifically. Could be a regulatory factor involved in maltose metabolism. This chain is Sugar fermentation stimulation protein A, found in Shigella flexneri.